The primary structure comprises 284 residues: Insulin-like growth factor-binding protein 2 (284 aa).

The first 21 residues, 1–21, serve as a signal peptide directing secretion; sequence MGLSRYLLGLLLGVLCTPAPA. One can recognise an IGFBP N-terminal domain in the interval 23–106; sequence VLFRCPPCSP…VLGLGTCGKR (84 aa). Intrachain disulfides connect cysteine 27/cysteine 56, cysteine 30/cysteine 58, cysteine 38/cysteine 59, cysteine 47/cysteine 62, cysteine 70/cysteine 83, and cysteine 77/cysteine 103. Residues 108 to 184 form a disordered region; it reads DTEYGSSQER…KSEDKKRPAR (77 aa). Basic and acidic residues predominate over residues 117–127; sequence RGTELPEERSD. The span at 136-145 shows a compositional bias: low complexity; it reads EAGPAVAGEA. Positions 152–180 are enriched in basic and acidic residues; that stretch reads KKEMKEIAVTRERANEQQRSKSNKSEDKK. In terms of domain architecture, Thyroglobulin type-1 spans 184-266; sequence RSLCQLQLDQ…SPTIRGDPEC (83 aa). Cystine bridges form between cysteine 187–cysteine 221, cysteine 232–cysteine 243, and cysteine 245–cysteine 266. Positions 261 to 263 match the Cell attachment site motif; sequence RGD.

In terms of assembly, interacts with igf1 and igf2.

It is found in the secreted. In terms of biological role, IGF-binding proteins prolong the half-life of the IGFs and have been shown to either inhibit or stimulate the growth promoting effects of the IGFs on cell culture. They alter the interaction of IGFs with their cell surface receptors. In Xenopus tropicalis (Western clawed frog), this protein is Insulin-like growth factor-binding protein 2.